Reading from the N-terminus, the 696-residue chain is Transcriptional activator of proteases prtT (696 aa).

The disordered stretch occupies residues 106-126; the sequence is DVADGSGRPESSTSGDTIRPK. The segment at residues 136-165 is a DNA-binding region (zn(2)-C6 fungal-type); that stretch reads CNTCRKLKTRCDLDPRGHACRRCLSLRIEC.

Belongs to the prtT family.

The protein resides in the nucleus. In terms of biological role, transcription factor required for protein utilization and degradation. Regulates transcription of major secreted proteases including a serine alkaline protease (alk1), a metalloprotease (mep), an aspergillopepsin (pep1), a sedolisin (sed2) and two dipeptidyl-peptidases (dppIV and dppV). However, it is not a virulence determinant in leukopenic mice. The chain is Transcriptional activator of proteases prtT (prtT) from Aspergillus fumigatus (strain ATCC MYA-4609 / CBS 101355 / FGSC A1100 / Af293) (Neosartorya fumigata).